Reading from the N-terminus, the 449-residue chain is Protein phosphatase fem-2 (449 aa).

The interval 28-34 is interaction with fem-1 and fem-3; it reads EEAFADE. Residues 54–56 form an interaction with fem-3 region; it reads IRF. The PPM-type phosphatase domain maps to 160 to 424; sequence GIHVSGDQLK…DNVSVVIGFL (265 aa). The Mg(2+) site is built by D202, G203, D370, and D415.

Belongs to the PP2C family. Component of a complex containing fem-1, fem-2 and fem-3. Interacts (via N-terminus) with fem-1 and fem-3. Component of the CBC(fem-1) E3 ubiquitin-protein ligase complex, at least composed of cul-2, elc-1, tra-1, fem-1, fem-2 and fem-3; mediates the ubiquitination and subsequent proteasomal degradation of tra-1. Interacts with tra-1. Interacts with sel-10. It depends on Mg(2+) as a cofactor. The cofactor is Mn(2+).

It carries out the reaction O-phospho-L-seryl-[protein] + H2O = L-seryl-[protein] + phosphate. The enzyme catalyses O-phospho-L-threonyl-[protein] + H2O = L-threonyl-[protein] + phosphate. In terms of biological role, dephosphorylates auto-phosphorylated Ca(2+)/calmodulin-dependent protein kinase unc-43/CAMKII in vitro. Involved in the regulation of sex determination. Together with fem-3, required for male sexual development by promoting the proteasomal-mediated degradation of tra-1, a transcription repressor of male-specific genes. Promotes apoptosis. In Caenorhabditis elegans, this protein is Protein phosphatase fem-2.